A 588-amino-acid polypeptide reads, in one-letter code: Snake venom 5'-nucleotidase (588 aa).

An N-terminal signal peptide occupies residues 1–40; that stretch reads MQTPKRRRGAQGCPRSSPSPPLLLLVRAVWFCAALSVAAG. Positions 51 and 53 each coordinate Zn(2+). Cys-66 and Cys-71 are oxidised to a cystine. Residues Asp-99 and Asn-131 each contribute to the Zn(2+) site. N-linked (GlcNAc...) asparagine glycosylation is present at Asn-167. Residues His-234 and His-257 each contribute to the Zn(2+) site. Residues Asn-347 and Asn-361 are each glycosylated (N-linked (GlcNAc...) asparagine). 2 cysteine pairs are disulfide-bonded: Cys-367/Cys-372 and Cys-379/Cys-401. Arg-368 contacts AMP. The AMP site is built by Asn-404 and Arg-409. N-linked (GlcNAc...) asparagine glycosylation occurs at Asn-418. AMP is bound at residue Phe-432. A disulfide bridge links Cys-491 with Cys-494. Phe-515 and Asp-521 together coordinate AMP. Residue Asn-532 is glycosylated (N-linked (GlcNAc...) asparagine). Ser-564 carries the GPI-anchor amidated serine lipid modification. A propeptide spans 565 to 588 (removed in mature form); sequence AGTLFQAQLFLTWGLCVSLLYFIL.

Belongs to the 5'-nucleotidase family. Requires Zn(2+) as cofactor. Venom 5'-nucleotidases (or a part thereof) may be released into the venom via exosome-like vesicles. They may be attached via a GPI anchor to the membrane of these vesicles. Soluble forms of 5'-nucleotidase might be released by cleavage of the ectodomain in the exosome-like vesicles or venom gland cells. Expressed by the venom gland.

The protein resides in the membrane. It carries out the reaction a ribonucleoside 5'-phosphate + H2O = a ribonucleoside + phosphate. Its function is as follows. Hydrolyzes nucleotides into nucleosides. Snake venom 5'-nucleotidases are widely distributed among venomous snake taxa, but there is a lack of information about their biological activities. They have been shown to inhibit platelet aggregation. This effect may be due to the liberation of inhibitory AMP or adenosine by its action on ADP released upon initiation of aggregation. Venom 5'-nucleotidases are also known to synergistically act in vivo with other toxins like ADPases, phospholipases, and disintegrins to exert a more pronounced anti-coagulant effect. In Crotalus adamanteus (Eastern diamondback rattlesnake), this protein is Snake venom 5'-nucleotidase.